A 642-amino-acid polypeptide reads, in one-letter code: 5-aminolevulinate synthase, non-specific, mitochondrial (642 aa).

A mitochondrion-targeting transit peptide spans 1-56 (METVVRRCPFLSRVPQAFLQKAGKSLLFYAQNCPKMMEVGAKPAPRTVSTSAAQCQ). The disordered stretch occupies residues 51-109 (SAAQCQQVKETPPANEKEKTAKAAVQQAPDESQMAQTPDGTQLPPGHPSPSTSQSSGSK). Residues 79–90 (PDESQMAQTPDG) show a composition bias toward polar residues. Over residues 99–108 (SPSTSQSSGS) the composition is skewed to low complexity. Residues Arg219, Ser336, and Lys355 each coordinate substrate. Residues Ser388, His416, and Thr444 each coordinate pyridoxal 5'-phosphate. Lys447 is an active-site residue. Lys447 is subject to N6-(pyridoxal phosphate)lysine. Residues Thr476 and Thr477 each coordinate pyridoxal 5'-phosphate. Thr564 serves as a coordination point for substrate. Pro578 carries the post-translational modification Hydroxyproline.

Belongs to the class-II pyridoxal-phosphate-dependent aminotransferase family. In terms of assembly, homodimer. Interacts (hydroxylated form) with VHL. The cofactor is pyridoxal 5'-phosphate. In normoxia, is hydroxylated at Pro-578, promoting interaction with VHL, initiating ubiquitination and subsequent degradation via the proteasome. In terms of processing, ubiquitinated; in normoxia following hydroxylation and interaction with VHL, leading to its subsequent degradation via the proteasome. As to expression, expressed in the liver, kidney, brain and testis.

Its subcellular location is the mitochondrion inner membrane. The catalysed reaction is succinyl-CoA + glycine + H(+) = 5-aminolevulinate + CO2 + CoA. It functions in the pathway porphyrin-containing compound metabolism; protoporphyrin-IX biosynthesis; 5-aminolevulinate from glycine: step 1/1. Functionally, catalyzes the pyridoxal 5'-phosphate (PLP)-dependent condensation of succinyl-CoA and glycine to form aminolevulinic acid (ALA), with CoA and CO2 as by-products. The polypeptide is 5-aminolevulinate synthase, non-specific, mitochondrial (Alas1) (Rattus norvegicus (Rat)).